The primary structure comprises 324 residues: Acetyl-coenzyme A carboxylase carboxyl transferase subunit alpha (324 aa).

The CoA carboxyltransferase C-terminal domain occupies 41-291; sequence RLDRLKEKIY…QEYVLQEWLK (251 aa).

This sequence belongs to the AccA family. In terms of assembly, acetyl-CoA carboxylase is a heterohexamer composed of biotin carboxyl carrier protein (AccB), biotin carboxylase (AccC) and two subunits each of ACCase subunit alpha (AccA) and ACCase subunit beta (AccD).

The protein localises to the cytoplasm. It catalyses the reaction N(6)-carboxybiotinyl-L-lysyl-[protein] + acetyl-CoA = N(6)-biotinyl-L-lysyl-[protein] + malonyl-CoA. It participates in lipid metabolism; malonyl-CoA biosynthesis; malonyl-CoA from acetyl-CoA: step 1/1. Its function is as follows. Component of the acetyl coenzyme A carboxylase (ACC) complex. First, biotin carboxylase catalyzes the carboxylation of biotin on its carrier protein (BCCP) and then the CO(2) group is transferred by the carboxyltransferase to acetyl-CoA to form malonyl-CoA. The sequence is that of Acetyl-coenzyme A carboxylase carboxyl transferase subunit alpha from Chlamydia muridarum (strain MoPn / Nigg).